Consider the following 261-residue polypeptide: Ribosome-inactivating protein PD-L3/PD-L4 (261 aa).

N10 carries N-linked (GlcNAc...) asparagine; in PD-L3 glycosylation. Disulfide bonds link C34–C258 and C84–C105. E175 is an active-site residue.

It belongs to the ribosome-inactivating protein family. Type 1 RIP subfamily.

It catalyses the reaction Endohydrolysis of the N-glycosidic bond at one specific adenosine on the 28S rRNA.. In terms of biological role, inhibits protein synthesis. Does not cleave supercoiled pBR322 dsDNA. This Phytolacca dioica (Bella sombra tree) protein is Ribosome-inactivating protein PD-L3/PD-L4.